The chain runs to 485 residues: U4/U6 small nuclear ribonucleoprotein Prp31 homolog (485 aa).

2 disordered regions span residues 1–36 (MATL…EEDV) and 329–361 (IEKW…RRLR). Acidic residues predominate over residues 11–36 (DLDELSDNEAELDENDGDVGKEEEDV). Positions 216-334 (IAPNLSAIVG…IRKKIEKWQE (119 aa)) constitute a Nop domain. The span at 334–348 (EPPPARQPKPLPVPD) shows a compositional bias: pro residues. The span at 352-361 (KKRRGGRRLR) shows a compositional bias: basic residues. The Nuclear localization signal signature appears at 352 to 365 (KKRRGGRRLRKMKE).

Belongs to the PRP31 family. As to quaternary structure, component of the U4/U6-U5 tri-snRNP complex composed of the U4, U6 and U5 snRNAs and pre-mRNA-splicing factors. Interacts with STA1 and SOP1.

The protein resides in the nucleus. It is found in the cajal body. Functionally, involved in pre-mRNA splicing. Required for the assembly of the U4/U5/U6 tri-snRNP complex, one of the building blocks of the spliceosome. Functions in association with STA1 and ZOP1 in spliceosome dynamics and pre-mRNA splicing. Required for transcriptional regulation and pre-mRNA splicing of cold-responsive genes, such as LTI78/RD29A, KIN2/COR6.6 or COR15A, especially under cold stress. May play a role in stress response. Involved in transcriptional gene silencing of endogenous transposable elements, independently of the RNA-directed DNA methylation (RdDM) pathway. Seems not to participate in the small RNA biogenesis of the RdDM pathway. The sequence is that of U4/U6 small nuclear ribonucleoprotein Prp31 homolog from Arabidopsis thaliana (Mouse-ear cress).